The sequence spans 297 residues: Large ribosomal subunit protein uL18 (297 aa).

Belongs to the universal ribosomal protein uL18 family. In terms of assembly, component of the large ribosomal subunit (LSU).

The protein localises to the cytoplasm. It localises to the nucleus. Functionally, component of the ribosome, a large ribonucleoprotein complex responsible for the synthesis of proteins in the cell. The small ribosomal subunit (SSU) binds messenger RNAs (mRNAs) and translates the encoded message by selecting cognate aminoacyl-transfer RNA (tRNA) molecules. The large subunit (LSU) contains the ribosomal catalytic site termed the peptidyl transferase center (PTC), which catalyzes the formation of peptide bonds, thereby polymerizing the amino acids delivered by tRNAs into a polypeptide chain. The nascent polypeptides leave the ribosome through a tunnel in the LSU and interact with protein factors that function in enzymatic processing, targeting, and the membrane insertion of nascent chains at the exit of the ribosomal tunnel. The chain is Large ribosomal subunit protein uL18 (RpL5) from Lysiphlebus testaceipes (Greenbugs aphid parastoid).